Here is a 325-residue protein sequence, read N- to C-terminus: tRNA N6-adenosine threonylcarbamoyltransferase (325 aa).

Positions 111 and 115 each coordinate Fe cation. Substrate contacts are provided by residues 134 to 138 (LVSGG), D167, G180, D184, and N284. Position 312 (D312) interacts with Fe cation.

This sequence belongs to the KAE1 / TsaD family. Fe(2+) serves as cofactor.

Its subcellular location is the cytoplasm. It carries out the reaction L-threonylcarbamoyladenylate + adenosine(37) in tRNA = N(6)-L-threonylcarbamoyladenosine(37) in tRNA + AMP + H(+). In terms of biological role, required for the formation of a threonylcarbamoyl group on adenosine at position 37 (t(6)A37) in tRNAs that read codons beginning with adenine. Is involved in the transfer of the threonylcarbamoyl moiety of threonylcarbamoyl-AMP (TC-AMP) to the N6 group of A37, together with TsaE and TsaB. TsaD likely plays a direct catalytic role in this reaction. The protein is tRNA N6-adenosine threonylcarbamoyltransferase of Trichodesmium erythraeum (strain IMS101).